A 754-amino-acid chain; its full sequence is Glutathione biosynthesis bifunctional protein GshAB (754 aa).

Positions 1–333 (MHINQLLQHA…KAQKLNDKIA (333 aa)) are glutamate--cysteine ligase. The 264-residue stretch at 489–752 (KKILRENGYP…LAKLFPEIST (264 aa)) folds into the ATP-grasp domain. 516–574 (SQIKNKPIVVKPKTTNFGLGISIFETAASHNDYEKALDIAFIEDYSVLVEEFIPGTEYR) contributes to the ATP binding site. The Mg(2+) site is built by D696, E717, and N719. Mn(2+)-binding residues include D696, E717, and N719.

In the N-terminal section; belongs to the glutamate--cysteine ligase type 1 family. Type 2 subfamily. In terms of assembly, monomer. The cofactor is Mg(2+). Mn(2+) is required as a cofactor.

The enzyme catalyses L-cysteine + L-glutamate + ATP = gamma-L-glutamyl-L-cysteine + ADP + phosphate + H(+). It catalyses the reaction gamma-L-glutamyl-L-cysteine + glycine + ATP = glutathione + ADP + phosphate + H(+). It functions in the pathway sulfur metabolism; glutathione biosynthesis; glutathione from L-cysteine and L-glutamate: step 1/2. Its pathway is sulfur metabolism; glutathione biosynthesis; glutathione from L-cysteine and L-glutamate: step 2/2. Synthesizes glutathione from L-glutamate and L-cysteine via gamma-L-glutamyl-L-cysteine. The chain is Glutathione biosynthesis bifunctional protein GshAB from Streptococcus mutans serotype c (strain ATCC 700610 / UA159).